Here is a 155-residue protein sequence, read N- to C-terminus: FUN14 domain-containing protein 1 (155 aa).

Over 1–47 the chain is Cytoplasmic; that stretch reads MATRNPPPQEYESDDDSYEVLDLTEYARRHHWWNRVFGHSSGPMVEK. Phosphoserine is present on residues Ser13 and Ser17. Tyr18 is modified (phosphotyrosine; by SRC). The YXXL motif lies at 18–21; the sequence is YEVL. A helical membrane pass occupies residues 48–68; that stretch reads YSVATQIVMGGVSGWCAGFLF. Over 69-74 the chain is Mitochondrial intermembrane; that stretch reads QKVGKL. The chain crosses the membrane as a helical span at residues 75–95; sequence AATAVGGGFLLLQIASHSGYV. The Cytoplasmic segment spans residues 96–133; that stretch reads QIDWKRVEKDVNKAKRQIKKRANKAAPEINNIIEEATE. Lys119 participates in a covalent cross-link: Glycyl lysine isopeptide (Lys-Gly) (interchain with G-Cter in ubiquitin). A helical transmembrane segment spans residues 134–154; that stretch reads FVKQNIVISSGFVGGFLLGLA. Residue Ser155 is a topological domain, mitochondrial intermembrane.

Belongs to the FUN14 family. In terms of assembly, interacts (via YXXL motif) with MAP1 LC3 family proteins MAP1LC3A, MAP1LC3B and GABARAP. Interacts with DNM1L/DPR1. Interacts with GPX4. Post-translationally, phosphorylation at Ser-13 by CK2 and at Tyr-18 by SRC inhibits activation of mitophagy. Following hypoxia, dephosphorylated at Tyr-18, leading to interaction with MAP1 LC3 family proteins and triggering mitophagy. Dephosphorylation is mediated by PGAM5. Phosphorylated by ULK1 at Ser-17 which enhances FUNDC1 binding to LC3. Ubiquitinated on Lys-119. Deubiquitinated by USP19; leading to hypoxia-induced DRP1 oligomerization and GTPase activity.

It localises to the mitochondrion outer membrane. Integral mitochondrial outer-membrane protein that mediates the formation of mitochondria-associated endoplasmic reticulum membranes (MAMs). In turn, mediates angiogenesis and neoangiogenesis through interference with intracellular Ca(2+) communication and regulation of the vascular endothelial growth factor receptor KDR/VEGFR2 expression at both mRNA and protein levels. Also acts as an activator of hypoxia-induced mitophagy, an important mechanism for mitochondrial quality and homeostasis, by interacting with and recruiting LC3 protein family to mitochondria. Mechanistically, recruits DRP1 at ER-mitochondria contact sites leading to DRP1 oligomerization and GTPase activity to facilitate mitochondrial fission during hypoxia. Additionally, plays a role in hepatic ferroptosis by interacting directly with glutathione peroxidase/GPX4 to facilitate its recruitment into mitochondria through TOM/TIM complex where it is degraded by mitophagy. This chain is FUN14 domain-containing protein 1 (FUNDC1), found in Bos taurus (Bovine).